The sequence spans 173 residues: Probable capsid assembly scaffolding protein (173 aa).

Low complexity predominate over residues 1–13 (MSDNPTPESTPEA). The segment at 1 to 27 (MSDNPTPESTPEAETPEVEKPMEPQGK) is disordered. A coiled-coil region spans residues 36–84 (SLRQEAAAARVAKKDAVEAAEARVKAEYEAKLAERDTAYTELQNQLGQA). The tract at residues 134-158 (GNKTPSPAFDPSQGRGGKPPIPLNG) is disordered.

It belongs to the L5likevirus scaffolding protein family.

In terms of biological role, scaffolding protein involved in the icosahedric procapsid assembly. Coassembles with the capsid proteins to form the procapsid, in which the scaffolding protein is found within the external shell of icosahedrally arranged capsid protein subunits. The polypeptide is Probable capsid assembly scaffolding protein (16) (Mycobacterium (Mycobacteriophage L5)).